The following is a 295-amino-acid chain: Pyridoxal 5'-phosphate synthase subunit PdxS (295 aa).

Asp25 lines the D-ribose 5-phosphate pocket. The active-site Schiff-base intermediate with D-ribose 5-phosphate is Lys82. Position 154 (Gly154) interacts with D-ribose 5-phosphate. Arg166 provides a ligand contact to D-glyceraldehyde 3-phosphate. D-ribose 5-phosphate is bound by residues Gly215 and 236–237 (GS).

The protein belongs to the PdxS/SNZ family. In terms of assembly, in the presence of PdxT, forms a dodecamer of heterodimers.

The catalysed reaction is aldehydo-D-ribose 5-phosphate + D-glyceraldehyde 3-phosphate + L-glutamine = pyridoxal 5'-phosphate + L-glutamate + phosphate + 3 H2O + H(+). The protein operates within cofactor biosynthesis; pyridoxal 5'-phosphate biosynthesis. In terms of biological role, catalyzes the formation of pyridoxal 5'-phosphate from ribose 5-phosphate (RBP), glyceraldehyde 3-phosphate (G3P) and ammonia. The ammonia is provided by the PdxT subunit. Can also use ribulose 5-phosphate and dihydroxyacetone phosphate as substrates, resulting from enzyme-catalyzed isomerization of RBP and G3P, respectively. The chain is Pyridoxal 5'-phosphate synthase subunit PdxS from Staphylococcus carnosus (strain TM300).